The primary structure comprises 449 residues: Xylose isomerase (449 aa).

Residues H101 and D104 contribute to the active site. Residues E232, E268, H271, D296, D307, D309, and D340 each contribute to the Mg(2+) site.

The protein belongs to the xylose isomerase family. In terms of assembly, homotetramer. Mg(2+) serves as cofactor.

It localises to the cytoplasm. It carries out the reaction alpha-D-xylose = alpha-D-xylulofuranose. The sequence is that of Xylose isomerase from Bifidobacterium longum (strain NCC 2705).